We begin with the raw amino-acid sequence, 229 residues long: Large ribosomal subunit protein uL1 (229 aa).

Belongs to the universal ribosomal protein uL1 family. Part of the 50S ribosomal subunit.

Its function is as follows. Binds directly to 23S rRNA. The L1 stalk is quite mobile in the ribosome, and is involved in E site tRNA release. Functionally, protein L1 is also a translational repressor protein, it controls the translation of the L11 operon by binding to its mRNA. This is Large ribosomal subunit protein uL1 from Latilactobacillus sakei subsp. sakei (strain 23K) (Lactobacillus sakei subsp. sakei).